We begin with the raw amino-acid sequence, 113 residues long: Large ribosomal subunit protein uL22 (113 aa).

It belongs to the universal ribosomal protein uL22 family. Part of the 50S ribosomal subunit.

This protein binds specifically to 23S rRNA; its binding is stimulated by other ribosomal proteins, e.g. L4, L17, and L20. It is important during the early stages of 50S assembly. It makes multiple contacts with different domains of the 23S rRNA in the assembled 50S subunit and ribosome. Functionally, the globular domain of the protein is located near the polypeptide exit tunnel on the outside of the subunit, while an extended beta-hairpin is found that lines the wall of the exit tunnel in the center of the 70S ribosome. The sequence is that of Large ribosomal subunit protein uL22 from Roseiflexus castenholzii (strain DSM 13941 / HLO8).